A 134-amino-acid polypeptide reads, in one-letter code: Probable salivary secreted peptide (134 aa).

Positions 1–24 (MGAQKTIAYLAIIAIAVIFAQVNT) are cleaved as a signal peptide.

The protein resides in the secreted. The sequence is that of Probable salivary secreted peptide from Bombus ignitus (Bumblebee).